Consider the following 124-residue polypeptide: Putative iron-sulfur cluster insertion protein ErpA (124 aa).

Residues Cys-52, Cys-116, and Cys-118 each contribute to the iron-sulfur cluster site.

This sequence belongs to the HesB/IscA family. As to quaternary structure, homodimer. Iron-sulfur cluster is required as a cofactor.

Its function is as follows. Required for insertion of 4Fe-4S clusters. The polypeptide is Putative iron-sulfur cluster insertion protein ErpA (Ralstonia pickettii (strain 12J)).